The chain runs to 113 residues: T cell receptor alpha variable 8-3 (113 aa).

The signal sequence occupies residues 1 to 20 (MLLELIPLLGIHFVLRTARA). One can recognise an Ig-like domain in the interval 21–113 (QSVTQPDIHI…DAAEYFCAVG (93 aa)). Residues C42 and C110 are joined by a disulfide bond. N-linked (GlcNAc...) asparagine glycosylation occurs at N43.

Alpha-beta TR is a heterodimer composed of an alpha and beta chain; disulfide-linked. The alpha-beta TR is associated with the transmembrane signaling CD3 coreceptor proteins to form the TR-CD3 (TcR or TCR). The assembly of alpha-beta TR heterodimers with CD3 occurs in the endoplasmic reticulum where a single alpha-beta TR heterodimer associates with one CD3D-CD3E heterodimer, one CD3G-CD3E heterodimer and one CD247 homodimer forming a stable octameric structure. CD3D-CD3E and CD3G-CD3E heterodimers preferentially associate with TR alpha and TR beta chains, respectively. The association of the CD247 homodimer is the last step of TcR assembly in the endoplasmic reticulum and is required for transport to the cell surface.

It is found in the cell membrane. In terms of biological role, v region of the variable domain of T cell receptor (TR) alpha chain that participates in the antigen recognition. Alpha-beta T cell receptors are antigen specific receptors which are essential to the immune response and are present on the cell surface of T lymphocytes. Recognize peptide-major histocompatibility (MH) (pMH) complexes that are displayed by antigen presenting cells (APC), a prerequisite for efficient T cell adaptive immunity against pathogens. Binding of alpha-beta TR to pMH complex initiates TR-CD3 clustering on the cell surface and intracellular activation of LCK that phosphorylates the ITAM motifs of CD3G, CD3D, CD3E and CD247 enabling the recruitment of ZAP70. In turn ZAP70 phosphorylates LAT, which recruits numerous signaling molecules to form the LAT signalosome. The LAT signalosome propagates signal branching to three major signaling pathways, the calcium, the mitogen-activated protein kinase (MAPK) kinase and the nuclear factor NF-kappa-B (NF-kB) pathways, leading to the mobilization of transcription factors that are critical for gene expression and essential for T cell growth and differentiation. The T cell repertoire is generated in the thymus, by V-(D)-J rearrangement. This repertoire is then shaped by intrathymic selection events to generate a peripheral T cell pool of self-MH restricted, non-autoaggressive T cells. Post-thymic interaction of alpha-beta TR with the pMH complexes shapes TR structural and functional avidity. This Homo sapiens (Human) protein is T cell receptor alpha variable 8-3.